The chain runs to 275 residues: 2,3,4,5-tetrahydropyridine-2,6-dicarboxylate N-succinyltransferase (275 aa).

Arg-104 and Asp-141 together coordinate substrate.

It belongs to the transferase hexapeptide repeat family. Homotrimer.

The protein localises to the cytoplasm. It catalyses the reaction (S)-2,3,4,5-tetrahydrodipicolinate + succinyl-CoA + H2O = (S)-2-succinylamino-6-oxoheptanedioate + CoA. It participates in amino-acid biosynthesis; L-lysine biosynthesis via DAP pathway; LL-2,6-diaminopimelate from (S)-tetrahydrodipicolinate (succinylase route): step 1/3. The polypeptide is 2,3,4,5-tetrahydropyridine-2,6-dicarboxylate N-succinyltransferase (Aeromonas hydrophila subsp. hydrophila (strain ATCC 7966 / DSM 30187 / BCRC 13018 / CCUG 14551 / JCM 1027 / KCTC 2358 / NCIMB 9240 / NCTC 8049)).